A 281-amino-acid chain; its full sequence is Rhomboid protease AarA (281 aa).

The next 7 membrane-spanning stretches (helical) occupy residues 16-36, 76-96, 105-125, 145-165, 185-205, 208-228, and 233-253; these read FSLGAIALTLTLVLLNIAVYF, MLHSNGTHLAFNCLALFVIGI, FKLLAIYIISGIGAALFSAYW, IGVGASGAIMGIAAASVIYLI, QLYNLIAMIALTLINGLQSGV, AAHIGGAIIGALISIAYILVP, and VANLCITVIAASLLTMMIYLY. S150 serves as the catalytic Nucleophile. The active-site Charge relay system is the H210.

Belongs to the peptidase S54 family.

The protein resides in the cell membrane. It carries out the reaction Cleaves type-1 transmembrane domains using a catalytic dyad composed of serine and histidine that are contributed by different transmembrane domains.. Rhomboid serine protease that catalyzes intramembrane proteolysis. Mediates quorum-sensing and the subsequent regulation of target genes via activation of the Tat protein export system. Catalyzes the proteolytic activation of TatA by removal of its N-terminal extension. The protein is Rhomboid protease AarA (aarA) of Providencia stuartii.